Reading from the N-terminus, the 101-residue chain is Threonine-rich inner membrane protein GfcA (101 aa).

The signal sequence occupies residues 1–21 (MKHKLSAILMAFMLTTPAAFA). The Cytoplasmic portion of the chain corresponds to 22–59 (APEATNGTEATTGTTGTTTTTTGATTTATTTGGVAAGA). The disordered stretch occupies residues 24–45 (EATNGTEATTGTTGTTTTTTGA). The chain crosses the membrane as a helical span at residues 60 to 80 (VGTATVVGVATAVGVATLAVV). Residues 81–101 (AANDSGDGGSHNTSTTTSTTR) are Periplasmic-facing. A disordered region spans residues 82–101 (ANDSGDGGSHNTSTTTSTTR).

It localises to the cell inner membrane. This chain is Threonine-rich inner membrane protein GfcA (gfcA), found in Escherichia coli (strain K12).